We begin with the raw amino-acid sequence, 76 residues long: U10-ctenitoxin-Pn1a (76 aa).

The N-terminal stretch at 1–15 is a signal peptide; sequence SFVFYLFTLITVVRA. The propeptide occupies 16 to 36; that stretch reads EEFILENEAEDIAPAVHGESG. 4 disulfide bridges follow: Cys-39–Cys-54, Cys-46–Cys-59, Cys-53–Cys-73, and Cys-61–Cys-71.

This sequence belongs to the neurotoxin 02 (plectoxin) family. 09 subfamily. Expressed by the venom gland.

The protein resides in the secreted. The chain is U10-ctenitoxin-Pn1a from Phoneutria nigriventer (Brazilian armed spider).